We begin with the raw amino-acid sequence, 561 residues long: Dihydroxy-acid dehydratase (561 aa).

Asp-80 is a Mg(2+) binding site. Cys-121 contributes to the [2Fe-2S] cluster binding site. Positions 122 and 123 each coordinate Mg(2+). Lys-123 carries the post-translational modification N6-carboxylysine. Cys-194 lines the [2Fe-2S] cluster pocket. Glu-448 is a Mg(2+) binding site. Ser-474 functions as the Proton acceptor in the catalytic mechanism.

This sequence belongs to the IlvD/Edd family. Homodimer. Requires [2Fe-2S] cluster as cofactor. It depends on Mg(2+) as a cofactor.

The enzyme catalyses (2R)-2,3-dihydroxy-3-methylbutanoate = 3-methyl-2-oxobutanoate + H2O. The catalysed reaction is (2R,3R)-2,3-dihydroxy-3-methylpentanoate = (S)-3-methyl-2-oxopentanoate + H2O. It participates in amino-acid biosynthesis; L-isoleucine biosynthesis; L-isoleucine from 2-oxobutanoate: step 3/4. Its pathway is amino-acid biosynthesis; L-valine biosynthesis; L-valine from pyruvate: step 3/4. Its function is as follows. Functions in the biosynthesis of branched-chain amino acids. Catalyzes the dehydration of (2R,3R)-2,3-dihydroxy-3-methylpentanoate (2,3-dihydroxy-3-methylvalerate) into 2-oxo-3-methylpentanoate (2-oxo-3-methylvalerate) and of (2R)-2,3-dihydroxy-3-methylbutanoate (2,3-dihydroxyisovalerate) into 2-oxo-3-methylbutanoate (2-oxoisovalerate), the penultimate precursor to L-isoleucine and L-valine, respectively. This chain is Dihydroxy-acid dehydratase, found in Anaeromyxobacter sp. (strain Fw109-5).